The primary structure comprises 501 residues: Protein anon-37Cs (501 aa).

It is found in the cytoplasm. Functionally, has a non-vital function. This Drosophila simulans (Fruit fly) protein is Protein anon-37Cs (anon-37Cs).